A 255-amino-acid chain; its full sequence is Dehydrogenase/reductase SDR family member 11 (255 aa).

The signal sequence occupies residues 1-23 (MERWTGRVALVTGASVGIGAAVA). Residues 13–18 (GASVGI), 38–39 (RS), E44, 65–66 (DL), and N92 each bind NADP(+). Substrate-binding residues include S146 and Y161. NADP(+) is bound by residues Y161, K165, 196-199 (VETG), and K203. Y161 serves as the catalytic Proton acceptor.

It belongs to the short-chain dehydrogenases/reductases (SDR) family.

The protein localises to the secreted. The catalysed reaction is a 3beta-hydroxysteroid + NADP(+) = a 3-oxosteroid + NADPH + H(+). It carries out the reaction 17beta-estradiol + NAD(+) = estrone + NADH + H(+). It catalyses the reaction 17beta-estradiol + NADP(+) = estrone + NADPH + H(+). Its pathway is steroid biosynthesis; estrogen biosynthesis. Inhibited by flavonoids including apigenin, luteolin, genistein, kaempferol and quercetin and also by carbenoxolone, zearalenone, glycyrrhetinic, curcumin and flufenamic acid. Catalyzes the conversion of the 17-keto group of estrone, 4- and 5-androstenes and 5-alpha-androstanes into their 17-beta-hydroxyl metabolites and the conversion of the 3-keto group of 3-, 3,17- and 3,20- diketosteroids into their 3-hydroxyl metabolites. Exhibits reductive 3-beta-hydroxysteroid dehydrogenase activity toward 5-beta-androstanes, 5-beta-pregnanes, 4-pregnenes and bile acids. May also reduce endogenous and exogenous alpha-dicarbonyl compounds and xenobiotic alicyclic ketones. This chain is Dehydrogenase/reductase SDR family member 11 (DHRS11), found in Gallus gallus (Chicken).